A 418-amino-acid chain; its full sequence is NADH-quinone oxidoreductase subunit D (418 aa).

The protein belongs to the complex I 49 kDa subunit family. In terms of assembly, NDH-1 is composed of 14 different subunits. Subunits NuoB, C, D, E, F, and G constitute the peripheral sector of the complex.

The protein localises to the cell inner membrane. The catalysed reaction is a quinone + NADH + 5 H(+)(in) = a quinol + NAD(+) + 4 H(+)(out). Its function is as follows. NDH-1 shuttles electrons from NADH, via FMN and iron-sulfur (Fe-S) centers, to quinones in the respiratory chain. The immediate electron acceptor for the enzyme in this species is believed to be ubiquinone. Couples the redox reaction to proton translocation (for every two electrons transferred, four hydrogen ions are translocated across the cytoplasmic membrane), and thus conserves the redox energy in a proton gradient. The sequence is that of NADH-quinone oxidoreductase subunit D from Bordetella avium (strain 197N).